The chain runs to 409 residues: ORC1-type DNA replication protein 1 (409 aa).

ATP is bound by residues 63–67 (TGKTA), Tyr-206, and Arg-218.

This sequence belongs to the CDC6/cdc18 family.

In terms of biological role, involved in regulation of DNA replication. The polypeptide is ORC1-type DNA replication protein 1 (cdc6-1) (Archaeoglobus fulgidus (strain ATCC 49558 / DSM 4304 / JCM 9628 / NBRC 100126 / VC-16)).